The sequence spans 234 residues: Triosephosphate isomerase (234 aa).

Residue 8 to 10 (NFK) coordinates substrate. The Electrophile role is filled by H90. E159 serves as the catalytic Proton acceptor. Residues G165 and S197 each contribute to the substrate site.

The protein belongs to the triosephosphate isomerase family. In terms of assembly, homodimer.

Its subcellular location is the cytoplasm. The catalysed reaction is D-glyceraldehyde 3-phosphate = dihydroxyacetone phosphate. It participates in carbohydrate biosynthesis; gluconeogenesis. Its pathway is carbohydrate degradation; glycolysis; D-glyceraldehyde 3-phosphate from glycerone phosphate: step 1/1. Involved in the gluconeogenesis. Catalyzes stereospecifically the conversion of dihydroxyacetone phosphate (DHAP) to D-glyceraldehyde-3-phosphate (G3P). This is Triosephosphate isomerase from Helicobacter pylori (strain Shi470).